The primary structure comprises 1376 residues: Mediator of RNA polymerase II transcription subunit 23 (1376 aa).

Residues 1346–1369 (SNSSSVQQTSSASSPTAQSTAGAA) show a composition bias toward low complexity. Positions 1346–1376 (SNSSSVQQTSSASSPTAQSTAGAAIPLSVTQ) are disordered.

It belongs to the Mediator complex subunit 23 family. As to quaternary structure, component of the Mediator complex.

The protein resides in the nucleus. In terms of biological role, component of the Mediator complex, a coactivator involved in the regulated transcription of nearly all RNA polymerase II-dependent genes. Mediator functions as a bridge to convey information from gene-specific regulatory proteins to the basal RNA polymerase II transcription machinery. Mediator is recruited to promoters by direct interactions with regulatory proteins and serves as a scaffold for the assembly of a functional preinitiation complex with RNA polymerase II and the general transcription factors. This Danio rerio (Zebrafish) protein is Mediator of RNA polymerase II transcription subunit 23 (med23).